The primary structure comprises 184 residues: ATP synthase subunit b, chloroplastic (184 aa).

The helical transmembrane segment at 27–49 threads the bilayer; that stretch reads LATNPINLSVVLGVLIFFGKGVL.

This sequence belongs to the ATPase B chain family. F-type ATPases have 2 components, F(1) - the catalytic core - and F(0) - the membrane proton channel. F(1) has five subunits: alpha(3), beta(3), gamma(1), delta(1), epsilon(1). F(0) has four main subunits: a(1), b(1), b'(1) and c(10-14). The alpha and beta chains form an alternating ring which encloses part of the gamma chain. F(1) is attached to F(0) by a central stalk formed by the gamma and epsilon chains, while a peripheral stalk is formed by the delta, b and b' chains.

The protein resides in the plastid. The protein localises to the chloroplast thylakoid membrane. Functionally, f(1)F(0) ATP synthase produces ATP from ADP in the presence of a proton or sodium gradient. F-type ATPases consist of two structural domains, F(1) containing the extramembraneous catalytic core and F(0) containing the membrane proton channel, linked together by a central stalk and a peripheral stalk. During catalysis, ATP synthesis in the catalytic domain of F(1) is coupled via a rotary mechanism of the central stalk subunits to proton translocation. Its function is as follows. Component of the F(0) channel, it forms part of the peripheral stalk, linking F(1) to F(0). This Cuscuta exaltata (Tall dodder) protein is ATP synthase subunit b, chloroplastic.